Reading from the N-terminus, the 378-residue chain is DNA replication and repair protein RecF (378 aa).

30–37 contributes to the ATP binding site; that stretch reads GRNGQGKT.

This sequence belongs to the RecF family.

It is found in the cytoplasm. The RecF protein is involved in DNA metabolism; it is required for DNA replication and normal SOS inducibility. RecF binds preferentially to single-stranded, linear DNA. It also seems to bind ATP. The sequence is that of DNA replication and repair protein RecF from Frankia alni (strain DSM 45986 / CECT 9034 / ACN14a).